Consider the following 436-residue polypeptide: MTVYHFVGIKGTGMSSLAQILHDMKNTVQGSDYEKRFFTQVALEKRGISILPFDKNNIKEGQVIIAGNAFPDTHEEIMAAKELNIPVHRYHHFLGNLMSQYTSVAVTGAHGKTSTTGLLAHVMQGANPTSYLIGDGTGHGVENSKYFAFEACEYRRHFLSYYPDYAIMTNIDFDHPDYFADINDVFHAFQEMALQVKKGIIACGDDEELQKIQAKVPVIFYGFGEDNDFQARNIQKRTDGTVFDVFVRNTYYETFKITGYGNHSVLNALAVIALCHYENIDVEVVKHQLTTFEGVKRRFNEKTVRDQVIIDDYAHHPTEINATIEAAHQKYPEREIIAIFQPHTFSRTETFLDEFAESLSKADQVYLCDIFGSARENKGELTIEDLQKRIDGAELITDTTTDILKKHKNGVLIFMGAGDIQKFEAAYIKEVQVAEK.

ATP is bound at residue glycine 108–serine 114.

The protein belongs to the MurCDEF family.

It is found in the cytoplasm. The catalysed reaction is UDP-N-acetyl-alpha-D-muramate + L-alanine + ATP = UDP-N-acetyl-alpha-D-muramoyl-L-alanine + ADP + phosphate + H(+). It participates in cell wall biogenesis; peptidoglycan biosynthesis. Its function is as follows. Cell wall formation. This Bacillus cytotoxicus (strain DSM 22905 / CIP 110041 / 391-98 / NVH 391-98) protein is UDP-N-acetylmuramate--L-alanine ligase.